The chain runs to 340 residues: Pre-rRNA-processing protein esf-2 (340 aa).

Composition is skewed to basic and acidic residues over residues methionine 1–aspartate 12 and aspartate 19–lysine 32. Residues methionine 1–glycine 103 form a disordered region. Positions aspartate 44–aspartate 64 are enriched in acidic residues. Over residues alanine 65 to serine 95 the composition is skewed to basic and acidic residues. One can recognise an RRM domain in the interval glycine 124 to isoleucine 214. The disordered stretch occupies residues alanine 272 to proline 329.

Belongs to the ESF2/ABP1 family.

The protein resides in the nucleus. It is found in the nucleolus. In terms of biological role, involved in the small subunit (SSU) processome assembly and function, and in the 18S rRNA synthesis. Required for the early cleavages at sites A0, A1 and A2. In Neurospora crassa (strain ATCC 24698 / 74-OR23-1A / CBS 708.71 / DSM 1257 / FGSC 987), this protein is Pre-rRNA-processing protein esf-2 (esf-2).